The primary structure comprises 76 residues: Protein CsbA (76 aa).

The Extracellular segment spans residues 1 to 5 (MITKA). Residues 6 to 22 (VFALFFPFMLVVLFTRV) traverse the membrane as a helical segment. Residues 23–27 (TFNHY) are Cytoplasmic-facing. Residues 28–44 (VAIALTAALLFASYLKG) form a helical membrane-spanning segment. The Extracellular segment spans residues 45–49 (YTETY). The chain crosses the membrane as a helical span at residues 50–66 (FIVGLDVVSLVAGGLYM). Residues 67 to 76 (AKKAAEKKEE) are Cytoplasmic-facing.

It localises to the cell membrane. This chain is Protein CsbA (csbA), found in Bacillus subtilis (strain 168).